Consider the following 166-residue polypeptide: MRMSTTTEIIAHHWAFAVFLIGAVGLCGLMLLGAYFLGGRAQARAKNVPYESGIDSVGSARMRLSAKFYLVAMFFVIFDVEALYLYAWSISIRESGWIGFIEAAIFILVLLAGLFYLVRIGALDWTPTRSNRRVSKPSTVRYASSHPQDISQELSVAGSQQANESR.

Helical transmembrane passes span 16-36 (FAVF…GAYF), 68-88 (FYLV…LYAW), and 98-118 (IGFI…FYLV). The tract at residues 141-166 (RYASSHPQDISQELSVAGSQQANESR) is disordered.

This sequence belongs to the complex I subunit 3 family. As to quaternary structure, NDH-1 is composed of 13 different subunits. Subunits NuoA, H, J, K, L, M, N constitute the membrane sector of the complex.

The protein resides in the cell inner membrane. It catalyses the reaction a quinone + NADH + 5 H(+)(in) = a quinol + NAD(+) + 4 H(+)(out). NDH-1 shuttles electrons from NADH, via FMN and iron-sulfur (Fe-S) centers, to quinones in the respiratory chain. The immediate electron acceptor for the enzyme in this species is believed to be ubiquinone. Couples the redox reaction to proton translocation (for every two electrons transferred, four hydrogen ions are translocated across the cytoplasmic membrane), and thus conserves the redox energy in a proton gradient. The sequence is that of NADH-quinone oxidoreductase subunit A from Yersinia pseudotuberculosis serotype O:1b (strain IP 31758).